The following is a 660-amino-acid chain: Rhamnogalacturonate lyase B (660 aa).

An N-terminal signal peptide occupies residues 1–18 (MRLGVCFSLAAAASVARA). 4 N-linked (GlcNAc...) asparagine glycosylation sites follow: asparagine 25, asparagine 109, asparagine 142, and asparagine 284. The segment at 446-466 (RLGTPDKSSGEFRHGAARDPT) is disordered. A compositionally biased stretch (basic and acidic residues) spans 453–466 (SSGEFRHGAARDPT). Residues asparagine 524, asparagine 566, and asparagine 635 are each glycosylated (N-linked (GlcNAc...) asparagine).

It belongs to the polysaccharide lyase 4 family.

Its subcellular location is the secreted. The catalysed reaction is Endotype eliminative cleavage of L-alpha-rhamnopyranosyl-(1-&gt;4)-alpha-D-galactopyranosyluronic acid bonds of rhamnogalacturonan I domains in ramified hairy regions of pectin leaving L-rhamnopyranose at the reducing end and 4-deoxy-4,5-unsaturated D-galactopyranosyluronic acid at the non-reducing end.. Functionally, pectinolytic enzymes consist of four classes of enzymes: pectin lyase, polygalacturonase, pectin methylesterase and rhamnogalacturonase. Degrades the rhamnogalacturonan I (RG-I) backbone of pectin. Active against linseed rhamnogalacturonan. The sequence is that of Rhamnogalacturonate lyase B (rglB) from Emericella nidulans (strain FGSC A4 / ATCC 38163 / CBS 112.46 / NRRL 194 / M139) (Aspergillus nidulans).